The sequence spans 489 residues: Cytochrome P450 monooxygenase orf5 (489 aa).

Residues 13 to 35 (FVRLLAFHLIGLFVSITVYRLFF) traverse the membrane as a helical segment. N-linked (GlcNAc...) asparagine glycans are attached at residues Asn-37, Asn-118, Asn-171, and Asn-345. Cys-428 provides a ligand contact to heme.

It belongs to the cytochrome P450 family. Requires heme as cofactor.

Its subcellular location is the membrane. It functions in the pathway mycotoxin biosynthesis. In terms of biological role, cytochrome P450 monooxygenase; part of the gene cluster that mediates the biosynthesis of brefeldin A (BFA), a protein transport inhibitor that shows antiviral, antifungal, and antitumor properties. The proposed biosynthesis of BFA involves formation of an acyclic polyketide chain that is differentially tailored throughout the backbone. The highly reducing polyketide synthase Bref-PKS is proposed to synthesize the precisely reduced octaketide precursor, which could then be directly offloaded by the thiohydrolase enzyme Bref-TH followed by a cytochrome P450 monooxygenase-mediated formation of the cyclopentane ring and macrocyclization to afford 7-deoxy BFA. Alternatively, the first ring annulation can also occur on the ACP-tethered intermediate before the thiohydrolase release and lactonization. The C7-hydroxylation by another cytochrome P450 monooxygenase is believed to be the final step in the process to obtain the final structure of BFA. In addition to the HRPKS Bref-PKS and the thiohydrolase Bref-TH, the brefeldin A biosynthesis cluster contains 4 cytochrome p450 monooxygenases (called orf3 to orf6), as well a the probable cluster-specific transcription regulator orf8. In Eupenicillium brefeldianum (Penicillium brefeldianum), this protein is Cytochrome P450 monooxygenase orf5.